Reading from the N-terminus, the 366-residue chain is Ribosomal RNA large subunit methyltransferase M (366 aa).

S-adenosyl-L-methionine-binding positions include Ser188, 221-224 (CPGG), Asp240, Asp260, and Asp277. The active-site Proton acceptor is Lys306.

Belongs to the class I-like SAM-binding methyltransferase superfamily. RNA methyltransferase RlmE family. RlmM subfamily. In terms of assembly, monomer.

It localises to the cytoplasm. The enzyme catalyses cytidine(2498) in 23S rRNA + S-adenosyl-L-methionine = 2'-O-methylcytidine(2498) in 23S rRNA + S-adenosyl-L-homocysteine + H(+). Functionally, catalyzes the 2'-O-methylation at nucleotide C2498 in 23S rRNA. This Salmonella arizonae (strain ATCC BAA-731 / CDC346-86 / RSK2980) protein is Ribosomal RNA large subunit methyltransferase M.